Reading from the N-terminus, the 260-residue chain is Ribose-5-phosphate isomerase A (260 aa).

Residues 33 to 36 (TGST), 89 to 92 (DGAD), and 102 to 105 (KGGG) each bind substrate. Glu111 (proton acceptor) is an active-site residue. Position 129 (Lys129) interacts with substrate.

This sequence belongs to the ribose 5-phosphate isomerase family. Homodimer.

It catalyses the reaction aldehydo-D-ribose 5-phosphate = D-ribulose 5-phosphate. It functions in the pathway carbohydrate degradation; pentose phosphate pathway; D-ribose 5-phosphate from D-ribulose 5-phosphate (non-oxidative stage): step 1/1. Functionally, catalyzes the reversible conversion of ribose-5-phosphate to ribulose 5-phosphate. This chain is Ribose-5-phosphate isomerase A, found in Dinoroseobacter shibae (strain DSM 16493 / NCIMB 14021 / DFL 12).